We begin with the raw amino-acid sequence, 333 residues long: NADH-quinone oxidoreductase subunit H (333 aa).

8 helical membrane passes run 15–35, 88–108, 117–137, 159–179, 191–211, 239–259, 274–296, and 313–333; these read FFIF…FVTY, FILA…VIPF, IGVG…GVVT, ISYE…AGSL, VWYI…AVAE, WAFF…LITV, IPGA…WFRV, and VLLP…ELFF.

Belongs to the complex I subunit 1 family. As to quaternary structure, NDH-1 is composed of 14 different subunits. Subunits NuoA, H, J, K, L, M, N constitute the membrane sector of the complex.

Its subcellular location is the cell membrane. The catalysed reaction is a quinone + NADH + 5 H(+)(in) = a quinol + NAD(+) + 4 H(+)(out). Functionally, NDH-1 shuttles electrons from NADH, via FMN and iron-sulfur (Fe-S) centers, to quinones in the respiratory chain. The immediate electron acceptor for the enzyme in this species is believed to be ubiquinone. Couples the redox reaction to proton translocation (for every two electrons transferred, four hydrogen ions are translocated across the cytoplasmic membrane), and thus conserves the redox energy in a proton gradient. This subunit may bind ubiquinone. In Bacillus cereus (strain G9842), this protein is NADH-quinone oxidoreductase subunit H.